The primary structure comprises 287 residues: Eukaryotic translation initiation factor 3 subunit G (287 aa).

Disordered regions lie at residues 1–34 (MSKL…KDGT) and 159–184 (TAGG…YVPP). An RRM domain is found at 207 to 285 (ATLRVTNVSE…LILRVEFAKR (79 aa)).

This sequence belongs to the eIF-3 subunit G family. Component of the eukaryotic translation initiation factor 3 (eIF-3) complex.

The protein localises to the cytoplasm. Its function is as follows. RNA-binding component of the eukaryotic translation initiation factor 3 (eIF-3) complex, which is involved in protein synthesis of a specialized repertoire of mRNAs and, together with other initiation factors, stimulates binding of mRNA and methionyl-tRNAi to the 40S ribosome. The eIF-3 complex specifically targets and initiates translation of a subset of mRNAs involved in cell proliferation. This subunit can bind 18S rRNA. The protein is Eukaryotic translation initiation factor 3 subunit G (tif35) of Aspergillus oryzae (strain ATCC 42149 / RIB 40) (Yellow koji mold).